The primary structure comprises 656 residues: Fidgetin-like protein 1 (656 aa).

Polar residues predominate over residues 293–302 (KYSNQPQRNP). The tract at residues 293–354 (KYSNQPQRNP…QGNSEMNAPS (62 aa)) is disordered. The span at 331–340 (RQEDVQDSNR) shows a compositional bias: basic and acidic residues. Residues Ala386 and 426–431 (GTGKTL) each bind ATP.

Belongs to the AAA ATPase family. Hexamer. It depends on Mg(2+) as a cofactor.

Its subcellular location is the nucleus. The protein localises to the cytoplasm. It is found in the perinuclear region. The enzyme catalyses ATP + H2O = ADP + phosphate + H(+). Functionally, may be involved in DNA double-strand break (DBS) repair via homologous recombination (HR). May regulate osteoblast proliferation and differentiation. This is Fidgetin-like protein 1 (fignl1) from Xenopus tropicalis (Western clawed frog).